A 283-amino-acid polypeptide reads, in one-letter code: Elongation factor Ts (283 aa).

The involved in Mg(2+) ion dislocation from EF-Tu stretch occupies residues 80 to 83; it reads TDFV.

Belongs to the EF-Ts family.

Its subcellular location is the cytoplasm. Its function is as follows. Associates with the EF-Tu.GDP complex and induces the exchange of GDP to GTP. It remains bound to the aminoacyl-tRNA.EF-Tu.GTP complex up to the GTP hydrolysis stage on the ribosome. The protein is Elongation factor Ts of Shigella boydii serotype 18 (strain CDC 3083-94 / BS512).